We begin with the raw amino-acid sequence, 315 residues long: Protein-methionine-sulfoxide reductase catalytic subunit MsrP (315 aa).

Residues 1–45 constitute a signal peptide (tat-type signal); it reads MPSYRPPKIASSEITPRQVYLRRREFLGAATLGAMALYGAGKASA. Mo-molybdopterin contacts are provided by residues N71, 74–75, C129, T164, N214, R219, and 230–232; these read YE and GIK.

The protein belongs to the MsrP family. As to quaternary structure, heterodimer of a catalytic subunit (MsrP) and a heme-binding subunit (MsrQ). Mo-molybdopterin serves as cofactor. Predicted to be exported by the Tat system. The position of the signal peptide cleavage has not been experimentally proven.

The protein resides in the periplasm. The enzyme catalyses L-methionyl-[protein] + a quinone + H2O = L-methionyl-(S)-S-oxide-[protein] + a quinol. The catalysed reaction is L-methionyl-[protein] + a quinone + H2O = L-methionyl-(R)-S-oxide-[protein] + a quinol. In terms of biological role, part of the MsrPQ system that repairs oxidized periplasmic proteins containing methionine sulfoxide residues (Met-O), using respiratory chain electrons. Thus protects these proteins from oxidative-stress damage caused by reactive species of oxygen and chlorine generated by the host defense mechanisms. MsrPQ is essential for the maintenance of envelope integrity under bleach stress, rescuing a wide series of structurally unrelated periplasmic proteins from methionine oxidation. The catalytic subunit MsrP is non-stereospecific, being able to reduce both (R-) and (S-) diastereoisomers of methionine sulfoxide. The polypeptide is Protein-methionine-sulfoxide reductase catalytic subunit MsrP (Rhizobium etli (strain ATCC 51251 / DSM 11541 / JCM 21823 / NBRC 15573 / CFN 42)).